Reading from the N-terminus, the 217-residue chain is Probable transaldolase (217 aa).

The active-site Schiff-base intermediate with substrate is lysine 83.

This sequence belongs to the transaldolase family. Type 3B subfamily.

It is found in the cytoplasm. It carries out the reaction D-sedoheptulose 7-phosphate + D-glyceraldehyde 3-phosphate = D-erythrose 4-phosphate + beta-D-fructose 6-phosphate. It participates in carbohydrate degradation; pentose phosphate pathway; D-glyceraldehyde 3-phosphate and beta-D-fructose 6-phosphate from D-ribose 5-phosphate and D-xylulose 5-phosphate (non-oxidative stage): step 2/3. Its function is as follows. Transaldolase is important for the balance of metabolites in the pentose-phosphate pathway. In Fervidobacterium nodosum (strain ATCC 35602 / DSM 5306 / Rt17-B1), this protein is Probable transaldolase.